The primary structure comprises 257 residues: uncharacterized protein (257 aa).

The chain crosses the membrane as a helical span at residues 6-26 (IFWLNLAAIIIISIVVSGGMF).

The protein belongs to the staphylococcal tandem lipoprotein family.

Its subcellular location is the cell membrane. This is an uncharacterized protein from Staphylococcus aureus (strain N315).